The following is a 245-amino-acid chain: OVARIAN TUMOR DOMAIN-containing deubiquitinating enzyme 11 (245 aa).

Residues 1 to 37 (MDENHRNPFANASTSARASGSTSASSNSSFSSSVADT) form a disordered region. A compositionally biased stretch (low complexity) spans 10-35 (ANASTSARASGSTSASSNSSFSSSVA). Residues 101 to 225 (LAELQMEGDG…EVHYNSLYAN (125 aa)) form the OTU domain. D109 is a catalytic residue. Catalysis depends on C112, which acts as the Nucleophile. H218 is a catalytic residue.

This sequence belongs to the peptidase C85 family.

The catalysed reaction is Thiol-dependent hydrolysis of ester, thioester, amide, peptide and isopeptide bonds formed by the C-terminal Gly of ubiquitin (a 76-residue protein attached to proteins as an intracellular targeting signal).. Hydrolase that can remove conjugated ubiquitin from proteins in vitro and may therefore play an important regulatory role at the level of protein turnover by preventing degradation. Inactive cysteine protease. The protein is OVARIAN TUMOR DOMAIN-containing deubiquitinating enzyme 11 of Arabidopsis thaliana (Mouse-ear cress).